A 494-amino-acid chain; its full sequence is ATP synthase subunit alpha 1 (494 aa).

This sequence belongs to the ATPase alpha/beta chains family. In terms of assembly, F-type ATPases have 2 components, CF(1) - the catalytic core - and CF(0) - the membrane proton channel. CF(1) has five subunits: alpha(3), beta(3), gamma(1), delta(1), epsilon(1). CF(0) has three main subunits: a(1), b(2) and c(9-12). The alpha and beta chains form an alternating ring which encloses part of the gamma chain. CF(1) is attached to CF(0) by a central stalk formed by the gamma and epsilon chains, while a peripheral stalk is formed by the delta and b chains.

Its subcellular location is the cell inner membrane. It carries out the reaction ATP + H2O + 4 H(+)(in) = ADP + phosphate + 5 H(+)(out). In terms of biological role, produces ATP from ADP in the presence of a proton gradient across the membrane. The alpha chain is a regulatory subunit. The polypeptide is ATP synthase subunit alpha 1 (Hahella chejuensis (strain KCTC 2396)).